A 127-amino-acid polypeptide reads, in one-letter code: Translation initiation factor 5A (127 aa).

Position 35 is a hypusine (lysine 35).

This sequence belongs to the eIF-5A family.

The protein resides in the cytoplasm. Functionally, functions by promoting the formation of the first peptide bond. The polypeptide is Translation initiation factor 5A (Methanococcoides burtonii (strain DSM 6242 / NBRC 107633 / OCM 468 / ACE-M)).